Here is a 119-residue protein sequence, read N- to C-terminus: Holo-[acyl-carrier-protein] synthase (119 aa).

Mg(2+) is bound by residues Asp5 and Glu51.

Belongs to the P-Pant transferase superfamily. AcpS family. Mg(2+) serves as cofactor.

The protein localises to the cytoplasm. It carries out the reaction apo-[ACP] + CoA = holo-[ACP] + adenosine 3',5'-bisphosphate + H(+). In terms of biological role, transfers the 4'-phosphopantetheine moiety from coenzyme A to a Ser of acyl-carrier-protein. This is Holo-[acyl-carrier-protein] synthase from Helicobacter pylori (strain G27).